A 432-amino-acid chain; its full sequence is Leucine-rich repeat-containing protein ODA7 (432 aa).

LRR repeat units lie at residues 47-68 (NLKA…PPLA), 69-90 (DLKC…EAVP), 91-112 (GLDT…ACCP), 113-134 (ALRT…AHLA), and 138-159 (ALQT…DILK). An LRRCT domain is found at 173 to 211 (PVVSNIKNYRKVLVTSIPSLTYLDDRPVFDNERKIAQAW). The stretch at 212 to 243 (LEGGLEGERAMRNQLKEEEEERSRKNHEFMMQ) forms a coiled coil. Disordered regions lie at residues 297-332 (RPGE…AAAE) and 368-432 (EELD…NDLD). 2 stretches are compositionally biased toward low complexity: residues 323-332 (GAWGSGAAAE) and 407-425 (VAAA…ISAA).

The protein belongs to the DNAAF1 family. As to quaternary structure, interacts with both outer row and I1 inner row dyneins.

Its subcellular location is the cytoplasm. It is found in the cytoskeleton. The protein localises to the cilium axoneme. In terms of biological role, cilium-specific protein required for cilia structures. Axonemal dynein-associated protein that participates in a structural link between inner and outer row dyneins. The chain is Leucine-rich repeat-containing protein ODA7 (ODA7) from Chlamydomonas reinhardtii (Chlamydomonas smithii).